A 154-amino-acid polypeptide reads, in one-letter code: Large ribosomal subunit protein uL13 (154 aa).

It belongs to the universal ribosomal protein uL13 family. In terms of assembly, part of the 50S ribosomal subunit.

Functionally, this protein is one of the early assembly proteins of the 50S ribosomal subunit, although it is not seen to bind rRNA by itself. It is important during the early stages of 50S assembly. The sequence is that of Large ribosomal subunit protein uL13 from Cereibacter sphaeroides (strain ATCC 17029 / ATH 2.4.9) (Rhodobacter sphaeroides).